Reading from the N-terminus, the 109-residue chain is Cysteine-rich venom protein 7 (109 aa).

The signal sequence occupies residues Met-1–Ala-21. Disulfide bonds link Cys-30-Cys-47, Cys-37-Cys-52, Cys-46-Cys-58, Cys-70-Cys-90, and Cys-78-Cys-98.

As to expression, expressed by the venom gland.

The protein resides in the secreted. This chain is Cysteine-rich venom protein 7, found in Pimpla hypochondriaca (Parasitoid wasp).